The primary structure comprises 833 residues: Serine/threonine-protein phosphatase 4 regulatory subunit 3A (833 aa).

Residues 1–100 (MTDTRRRVKV…DEIWEKICQV (100 aa)) form the WH1 domain. Phosphoserine occurs at positions 117 and 127. At Lys-655 the chain carries N6-acetyllysine. The span at 683–694 (FNTDEDDMEDGE) shows a compositional bias: acidic residues. 2 disordered regions span residues 683-712 (FNTDEDDMEDGEAVVSPSDKTKNDDDIMDP) and 733-833 (KTNL…KFDS). Residues Ser-698, Ser-741, Ser-768, Ser-771, Ser-774, Ser-777, and Ser-780 each carry the phosphoserine modification. Over residues 734–751 (TNLSGRQSPSFKLSLSSG) the composition is skewed to polar residues. Residues 752–768 (TKTNLTSQSSTTNLPGS) show a composition bias toward low complexity. Residues 785 to 794 (PKNTSQTAAI) are compositionally biased toward polar residues. Residues 806 to 820 (YPDDDEDDDEDEDKE) are compositionally biased toward acidic residues.

The protein belongs to the SMEK family. Serine/threonine-protein phosphatase 4 (PP4) occurs in different assemblies of the catalytic and one or more regulatory subunits. Component of the PP4 complex PPP4C-PPP4R2-PPP4R3A. Interacts with PPP4C; the interaction requires PPP4R2.

It is found in the cytoplasm. The protein resides in the cytoskeleton. It localises to the microtubule organizing center. The protein localises to the centrosome. Its subcellular location is the nucleus. In terms of biological role, regulatory subunit of serine/threonine-protein phosphatase 4. May regulate the activity of PPP4C at centrosomal microtubule organizing centers. The PPP4C-PPP4R2-PPP4R3A PP4 complex specifically dephosphorylates H2AX phosphorylated on 'Ser-140' (gamma-H2AX) generated during DNA replication and required for DNA DSB repair. The chain is Serine/threonine-protein phosphatase 4 regulatory subunit 3A from Homo sapiens (Human).